Here is a 433-residue protein sequence, read N- to C-terminus: Enolase (433 aa).

(2R)-2-phosphoglycerate is bound at residue Gln167. The active-site Proton donor is the Glu209. Residues Asp246, Glu287, and Asp314 each coordinate Mg(2+). Positions 339, 368, 369, and 390 each coordinate (2R)-2-phosphoglycerate. Lys339 acts as the Proton acceptor in catalysis.

Belongs to the enolase family. Mg(2+) serves as cofactor.

It is found in the cytoplasm. Its subcellular location is the secreted. The protein localises to the cell surface. The catalysed reaction is (2R)-2-phosphoglycerate = phosphoenolpyruvate + H2O. Its pathway is carbohydrate degradation; glycolysis; pyruvate from D-glyceraldehyde 3-phosphate: step 4/5. In terms of biological role, catalyzes the reversible conversion of 2-phosphoglycerate (2-PG) into phosphoenolpyruvate (PEP). It is essential for the degradation of carbohydrates via glycolysis. This chain is Enolase, found in Prochlorococcus marinus (strain NATL2A).